The sequence spans 759 residues: Protein MTSS 1 (759 aa).

In terms of domain architecture, IMD spans M1 to S254. Positions L108–Q157 form a coiled coil. Residues S259 to N309 are disordered. T262 carries the phosphothreonine modification. S265, S266, S275, and S326 each carry phosphoserine. Positions Q331–F354 are disordered. The residue at position 429 (T429) is a Phosphothreonine. Disordered regions lie at residues Q431–R472 and K569–S759. T607 is modified (phosphothreonine). The span at P612–V627 shows a compositional bias: low complexity. Phosphoserine occurs at positions 648 and 651. Residues G660–S670 show a composition bias toward polar residues. Residues V675–S685 are compositionally biased toward pro residues. Residues Q731–T748 form the WH2 domain.

It belongs to the MTSS family. In terms of assembly, binds to actin. Strongly expressed in the developing neurons and skeletal and cardiac muscles in embryos. Strongly expressed also in liver, outer layers of the kidney, and in the Purkinje cells of the brain.

The protein localises to the cytoplasm. The protein resides in the cytoskeleton. In terms of biological role, inhibits the nucleation of actin filaments in vitro. This chain is Protein MTSS 1, found in Mus musculus (Mouse).